The sequence spans 202 residues: Small ribosomal subunit protein uS4c (202 aa).

The S4 RNA-binding domain maps to 89–152 (MRLDNIIFRL…QSNTFINNCI (64 aa)).

It belongs to the universal ribosomal protein uS4 family. In terms of assembly, part of the 30S ribosomal subunit. Contacts protein S5. The interaction surface between S4 and S5 is involved in control of translational fidelity.

It localises to the plastid. Its function is as follows. One of the primary rRNA binding proteins, it binds directly to 16S rRNA where it nucleates assembly of the body of the 30S subunit. Functionally, with S5 and S12 plays an important role in translational accuracy. The sequence is that of Small ribosomal subunit protein uS4c (rps4) from Epifagus virginiana (Beechdrops).